A 100-amino-acid chain; its full sequence is Gas vesicle protein J (100 aa).

It belongs to the gas vesicle GvpA family. In terms of assembly, interacts with GvpA.

The protein resides in the gas vesicle. Functionally, a minor component of the gas vesicle, might be involved in nucleating gas vesicle formation. This protein could be important for the shape determination of the gas vesicle. Gas vesicles (GV) are hollow, gas filled proteinaceous nanostructures. During planktonic growth they allow positioning of the organism at a favorable depth for light or nutrient acquisition. In terms of biological role, when a minimal gvp locus (gvpA2-gvpR-gvpN-gvpF-gvpG-gvpL-gvpS-gvpK-gvpJ-gvpT-gvpU, called pNL29) is expressed in E.coli gas vesicles are made. The polypeptide is Gas vesicle protein J (Priestia megaterium (Bacillus megaterium)).